We begin with the raw amino-acid sequence, 624 residues long: Kelch-like ECH-associated protein 1 (624 aa).

Cys-38 bears the S-(2-succinyl)cysteine mark. In terms of domain architecture, BTB spans 77–149; it reads CDVTLQVKYE…AYTASISVGE (73 aa). Arg-135 is covalently cross-linked (N5-[4-(S-L-cysteinyl)-5-methyl-1H-imidazol-2-yl]-L-ornithine (Arg-Cys) (interchain with C-151 in KEAP1)). 2 positions are modified to S-(2-succinyl)cysteine: Cys-151 and Cys-241. Residue Cys-151 is modified to S-(2,3-dicarboxypropyl)cysteine; alternate. Cys-151 carries the post-translational modification S-nitrosocysteine; alternate. Cys-151 is covalently cross-linked (N5-[4-(S-L-cysteinyl)-5-methyl-1H-imidazol-2-yl]-L-ornithine (Cys-Arg) (interchain with R-135 in KEAP1)). The BACK domain maps to 184 to 286; sequence AIGIANFAEQ…TPRFLQTQLQ (103 aa). An S-(2,3-dicarboxypropyl)cysteine mark is found at Cys-257 and Cys-273. 2 positions are modified to S-(2-succinyl)cysteine: Cys-288 and Cys-319. The residue at position 288 (Cys-288) is an S-(2,3-dicarboxypropyl)cysteine; alternate. Kelch repeat units lie at residues 327–372, 373–423, 424–470, 471–517, 519–564, and 565–611; these read LIYT…VVGG, LLYA…VIDG, HIYA…VLNR, LLYA…VLHS, IYAA…VHQG, and RIYV…VTME. Cys-434 is modified (S-cGMP-cysteine). An S-(2-succinyl)cysteine modification is found at Cys-613.

It belongs to the KEAP1 family. In terms of assembly, component of the BCR(KEAP1) E3 ubiquitin ligase complex, at least composed of 2 molecules of CUL3, 2 molecules of KEAP1, and RBX1. Interacts with NFE2L2/NRF2; the interaction is direct. Forms a ternary complex with NFE2L2/NRF2 and PGAM5. Interacts with (phosphorylated) SQSTM1/p62; the interaction is direct and inactivates the BCR(KEAP1) complex by sequestering it in inclusion bodies, promoting its degradation. Interacts with NFE2L1. Interacts with BPTF and PTMA. Interacts with MAP1LC3B. Interacts indirectly with ENC1. Interacts with SESN1 and SESN2. Interacts with HSP90AA1 and HSP90AB1. Interacts with PGCKA1; this interaction prevents the ubiquitination of KEAP1 by TRIM25, thus protecting KEAP1 from degradation. Non-enzymatic covalent modifications of reactive cysteines by electrophile metabolites inactivate the BCR(KEAP1) complex. Accumulation of fumarate promotes the formation of cysteine S-succination (S-(2-succinyl)cysteine), leading to inactivate the BCR(KEAP1) complex and promote NFE2L2/NRF2 nuclear accumulation and activation. Nitric oxide-dependent 8-Nitro-cGMP formation promotes cysteine guanylation (S-cGMP-cysteine), leading to NFE2L2/NRF2 nuclear accumulation and activation. Itaconate, an anti-inflammatory metabolite generated in response to lipopolysaccharide, alkylates cysteines, activating NFE2L2/NRF2. Methylglyoxal, a reactive metabolite that accumulates when the glycolytic enzyme PGK1 is inhibited, promotes formation of a methylimidazole cross-link between proximal Cys-151 and Arg-135 on another KEAP1 molecule, resulting in an inactive dimer that inactivates the BCR(KEAP1) complex. Post-translationally, degraded via a proteasomal-independent process during selective autophagy: interaction with phosphorylated SQSTM1/p62 sequesters KEAP1 in inclusion bodies, leading to its degradation. In terms of processing, auto-ubiquitinated by the BCR(KEAP1) complex. Quinone-induced oxidative stress, but not sulforaphane, increases its ubiquitination. Ubiquitination and subsequent degradation is most pronounced following prolonged exposure of cells to oxidative stress, particularly in glutathione-deficient cells that are highly susceptible to oxidative stress. Deubiquitinated by USP25; leading to stabilization. Ubiquitinated by TRIM25; leading to degradation upon ER stress.

It is found in the cytoplasm. The protein localises to the nucleus. Its pathway is protein modification; protein ubiquitination. With respect to regulation, ubiquitin ligase activity of the BCR(KEAP1) complex is inhibited by oxidative stress and electrophile metabolites such as sulforaphane. Electrophile metabolites react with reactive cysteine residues in KEAP1 and trigger non-enzymatic covalent modifications of these cysteine residues, leading to inactivate the ubiquitin ligase activity of the BCR(KEAP1) complex. Selective autophagy also inactivates the BCR(KEAP1) complex via interaction between KEAP1 and SQSTM1/p62, which sequesters the complex in inclusion bodies and promotes its degradation. In terms of biological role, substrate-specific adapter of a BCR (BTB-CUL3-RBX1) E3 ubiquitin ligase complex that regulates the response to oxidative stress by targeting NFE2L2/NRF2 for ubiquitination. KEAP1 acts as a key sensor of oxidative and electrophilic stress: in normal conditions, the BCR(KEAP1) complex mediates ubiquitination and degradation of NFE2L2/NRF2, a transcription factor regulating expression of many cytoprotective genes. In response to oxidative stress, different electrophile metabolites trigger non-enzymatic covalent modifications of highly reactive cysteine residues in KEAP1, leading to inactivate the ubiquitin ligase activity of the BCR(KEAP1) complex, promoting NFE2L2/NRF2 nuclear accumulation and expression of phase II detoxifying enzymes. In response to selective autophagy, KEAP1 is sequestered in inclusion bodies following its interaction with SQSTM1/p62, leading to inactivation of the BCR(KEAP1) complex and activation of NFE2L2/NRF2. The BCR(KEAP1) complex also mediates ubiquitination of SQSTM1/p62, increasing SQSTM1/p62 sequestering activity and degradation. The BCR(KEAP1) complex also targets BPTF and PGAM5 for ubiquitination and degradation by the proteasome. This is Kelch-like ECH-associated protein 1 from Rattus norvegicus (Rat).